The primary structure comprises 470 residues: Cannabinoid receptor type 1B (470 aa).

Over 1-113 (MKLALHRIAG…CFMILTPAQQ (113 aa)) the chain is Extracellular. Residues asparagine 78 and asparagine 86 are each glycosylated (N-linked (GlcNAc...) asparagine). The chain crosses the membrane as a helical span at residues 114-139 (LVIVILAITLGTFTVLENFVVLCVIL). At 140–151 (HSHTLRSRPSYH) the chain is on the cytoplasmic side. A helical membrane pass occupies residues 152–172 (FIGSLAVADLIGSIIFVYSFL). The Extracellular segment spans residues 173 to 184 (DFHVLHRKDSPS). A helical transmembrane segment spans residues 185 to 209 (IFLFKLAGVIASFTASVGSLFLTAI). The Cytoplasmic segment spans residues 210 to 229 (DRYVSIHRPMAYKRIITKTK). The helical transmembrane segment at 230-252 (AVIAFSVMWAISIEFSLLPLLGW) threads the bilayer. Residues 253-270 (NCKRLHSVCSDIFPLIDE) are Extracellular-facing. A helical transmembrane segment spans residues 271–296 (KYLMFWIGMTTVLLLFIIYAYMFILW). The Cytoplasmic segment spans residues 297–341 (KSHHHAVRMLSRSSQRSIIVYTSEGTKVQTVRPEQARMDLRLAKT). A helical transmembrane segment spans residues 342-362 (LVLILVALIICWGPLLAIMVY). Residues 363 to 374 (DLFGRVNDFIKT) are Extracellular-facing. The chain crosses the membrane as a helical span at residues 375–396 (VFAFCSMLCLLNSTINPVIYAM). Over 397–470 (RSKDLRRAFV…VTASSPAEAV (74 aa)) the chain is Cytoplasmic. A lipid anchor (S-palmitoyl cysteine) is attached at cysteine 412. Over residues 418–434 (SLDSSAESDWNSRSVRS) the composition is skewed to polar residues. The tract at residues 418–450 (SLDSSAESDWNSRSVRSTGGRAGKDRSVGGKPQ) is disordered.

Belongs to the G-protein coupled receptor 1 family. Post-translationally, palmitoylation at Cys-412 is important for recruitment at both plasma membrane and lipid rafts and association with G protein alpha subunits.

The protein resides in the cell membrane. The protein localises to the mitochondrion outer membrane. It localises to the cell projection. Its subcellular location is the axon. It is found in the presynapse. G-protein coupled receptor for cannabinoids. Mediates many cannabinoid-induced effects in the central nervous system (CNS), as well as in peripheral tissues. Regulates cellular respiration and energy production in response to cannabinoids. Signaling typically involves reduction in cyclic AMP. The polypeptide is Cannabinoid receptor type 1B (cnr1b) (Takifugu rubripes (Japanese pufferfish)).